Consider the following 706-residue polypeptide: Glutamine-dependent NAD(+) synthetase (706 aa).

Residues V5–L275 enclose the CN hydrolase domain. The active-site Proton acceptor; for glutaminase activity is E45. The For glutaminase activity role is filled by K114. C175 serves as the catalytic Nucleophile; for glutaminase activity. The ligase stretch occupies residues Y325–D706. P355–S362 is a binding site for ATP. The active site involves S357.

The protein in the C-terminal section; belongs to the NAD synthetase family. In terms of assembly, homohexamer.

The enzyme catalyses deamido-NAD(+) + L-glutamine + ATP + H2O = L-glutamate + AMP + diphosphate + NAD(+) + H(+). It participates in cofactor biosynthesis; NAD(+) biosynthesis; NAD(+) from deamido-NAD(+) (L-Gln route): step 1/1. Its function is as follows. Catalyzes the final step of the nicotinamide adenine dinucleotide (NAD) de novo synthesis pathway, the ATP-dependent amidation of deamido-NAD using L-glutamine as a nitrogen source. In Homo sapiens (Human), this protein is Glutamine-dependent NAD(+) synthetase (NADSYN1).